A 240-amino-acid polypeptide reads, in one-letter code: UDP-2,3-diacylglucosamine hydrolase (240 aa).

5 residues coordinate Mn(2+): Asp8, His10, Asp41, Asn79, and His114. Asn79–Arg80 provides a ligand contact to substrate. Substrate is bound by residues Asp122, Ser160, Asn164, Lys167, and His195. Mn(2+)-binding residues include His195 and His197.

The protein belongs to the LpxH family. Requires Mn(2+) as cofactor.

The protein localises to the cell inner membrane. It catalyses the reaction UDP-2-N,3-O-bis[(3R)-3-hydroxytetradecanoyl]-alpha-D-glucosamine + H2O = 2-N,3-O-bis[(3R)-3-hydroxytetradecanoyl]-alpha-D-glucosaminyl 1-phosphate + UMP + 2 H(+). It participates in glycolipid biosynthesis; lipid IV(A) biosynthesis; lipid IV(A) from (3R)-3-hydroxytetradecanoyl-[acyl-carrier-protein] and UDP-N-acetyl-alpha-D-glucosamine: step 4/6. Its function is as follows. Hydrolyzes the pyrophosphate bond of UDP-2,3-diacylglucosamine to yield 2,3-diacylglucosamine 1-phosphate (lipid X) and UMP by catalyzing the attack of water at the alpha-P atom. Involved in the biosynthesis of lipid A, a phosphorylated glycolipid that anchors the lipopolysaccharide to the outer membrane of the cell. The polypeptide is UDP-2,3-diacylglucosamine hydrolase (Escherichia coli O81 (strain ED1a)).